We begin with the raw amino-acid sequence, 523 residues long: Solute carrier family 35 member F5 (523 aa).

The next 2 membrane-spanning stretches (helical) occupy residues methionine 69–leucine 89 and phenylalanine 101–tryptophan 121. Serine 207 bears the Phosphoserine mark. The next 8 helical transmembrane spans lie at isoleucine 243–serine 263, alanine 268–phenylalanine 288, phenylalanine 296–leucine 316, threonine 327–isoleucine 347, methionine 361–leucine 381, valine 395–tryptophan 415, phenylalanine 420–isoleucine 440, and tryptophan 452–cysteine 472. Positions phenylalanine 252–leucine 316 constitute an EamA domain.

This sequence belongs to the SLC35F solute transporter family.

Its subcellular location is the membrane. Functionally, putative solute transporter. The sequence is that of Solute carrier family 35 member F5 (SLC35F5) from Pongo abelii (Sumatran orangutan).